A 69-amino-acid polypeptide reads, in one-letter code: Large ribosomal subunit protein bL31 (69 aa).

Zn(2+) is bound by residues Cys16, Cys18, Cys36, and Cys39.

This sequence belongs to the bacterial ribosomal protein bL31 family. Type A subfamily. In terms of assembly, part of the 50S ribosomal subunit. Requires Zn(2+) as cofactor.

Binds the 23S rRNA. The sequence is that of Large ribosomal subunit protein bL31 from Ruminiclostridium cellulolyticum (strain ATCC 35319 / DSM 5812 / JCM 6584 / H10) (Clostridium cellulolyticum).